Reading from the N-terminus, the 314-residue chain is Methionyl-tRNA formyltransferase (314 aa).

Residue 109 to 112 (SVLP) coordinates (6S)-5,6,7,8-tetrahydrofolate.

This sequence belongs to the Fmt family.

It catalyses the reaction L-methionyl-tRNA(fMet) + (6R)-10-formyltetrahydrofolate = N-formyl-L-methionyl-tRNA(fMet) + (6S)-5,6,7,8-tetrahydrofolate + H(+). Attaches a formyl group to the free amino group of methionyl-tRNA(fMet). The formyl group appears to play a dual role in the initiator identity of N-formylmethionyl-tRNA by promoting its recognition by IF2 and preventing the misappropriation of this tRNA by the elongation apparatus. This is Methionyl-tRNA formyltransferase from Dictyoglomus turgidum (strain DSM 6724 / Z-1310).